A 196-amino-acid chain; its full sequence is MKVAVVKYNAGNIRSVDYALKRLGVEAVITADKEILQSADKVIFPGVGEAGTTMNHLKATGLDELIKNLRQPVFGICLGMQLMCRHSEEGEVDCLNIFDVDVKRFVPQKHEDKVPHMGWNTIGKTNSKLFEGFTEEEFVYFVHSFYVPVCDFTAAETDYIHPFSAALHKDNFYATQFHPEKSGKTGERVLRNFLDL.

The Glutamine amidotransferase type-1 domain occupies 2-196 (KVAVVKYNAG…ERVLRNFLDL (195 aa)). The active-site Nucleophile is the cysteine 77. Active-site residues include histidine 178 and glutamate 180.

In terms of assembly, heterodimer of HisH and HisF.

Its subcellular location is the cytoplasm. The catalysed reaction is 5-[(5-phospho-1-deoxy-D-ribulos-1-ylimino)methylamino]-1-(5-phospho-beta-D-ribosyl)imidazole-4-carboxamide + L-glutamine = D-erythro-1-(imidazol-4-yl)glycerol 3-phosphate + 5-amino-1-(5-phospho-beta-D-ribosyl)imidazole-4-carboxamide + L-glutamate + H(+). It catalyses the reaction L-glutamine + H2O = L-glutamate + NH4(+). It functions in the pathway amino-acid biosynthesis; L-histidine biosynthesis; L-histidine from 5-phospho-alpha-D-ribose 1-diphosphate: step 5/9. Functionally, IGPS catalyzes the conversion of PRFAR and glutamine to IGP, AICAR and glutamate. The HisH subunit catalyzes the hydrolysis of glutamine to glutamate and ammonia as part of the synthesis of IGP and AICAR. The resulting ammonia molecule is channeled to the active site of HisF. This is Imidazole glycerol phosphate synthase subunit HisH from Bacteroides thetaiotaomicron (strain ATCC 29148 / DSM 2079 / JCM 5827 / CCUG 10774 / NCTC 10582 / VPI-5482 / E50).